The primary structure comprises 316 residues: Ribosomal RNA small subunit methyltransferase H (316 aa).

S-adenosyl-L-methionine is bound by residues 35-37 (GGH), D55, F79, D101, and Q108.

This sequence belongs to the methyltransferase superfamily. RsmH family.

The protein localises to the cytoplasm. It catalyses the reaction cytidine(1402) in 16S rRNA + S-adenosyl-L-methionine = N(4)-methylcytidine(1402) in 16S rRNA + S-adenosyl-L-homocysteine + H(+). Specifically methylates the N4 position of cytidine in position 1402 (C1402) of 16S rRNA. In Vibrio campbellii (strain ATCC BAA-1116), this protein is Ribosomal RNA small subunit methyltransferase H.